The following is a 64-amino-acid chain: Large ribosomal subunit protein bL33 (64 aa).

This sequence belongs to the bacterial ribosomal protein bL33 family.

This Nostoc punctiforme (strain ATCC 29133 / PCC 73102) protein is Large ribosomal subunit protein bL33.